A 186-amino-acid chain; its full sequence is ATP synthase subunit delta (186 aa).

This sequence belongs to the ATPase delta chain family. In terms of assembly, F-type ATPases have 2 components, F(1) - the catalytic core - and F(0) - the membrane proton channel. F(1) has five subunits: alpha(3), beta(3), gamma(1), delta(1), epsilon(1). CF(0) has four main subunits: a(1), b(1), b'(1) and c(10-14). The alpha and beta chains form an alternating ring which encloses part of the gamma chain. F(1) is attached to F(0) by a central stalk formed by the gamma and epsilon chains, while a peripheral stalk is formed by the delta, b and b' chains.

It is found in the cell inner membrane. Functionally, f(1)F(0) ATP synthase produces ATP from ADP in the presence of a proton or sodium gradient. F-type ATPases consist of two structural domains, F(1) containing the extramembraneous catalytic core and F(0) containing the membrane proton channel, linked together by a central stalk and a peripheral stalk. During catalysis, ATP synthesis in the catalytic domain of F(1) is coupled via a rotary mechanism of the central stalk subunits to proton translocation. In terms of biological role, this protein is part of the stalk that links CF(0) to CF(1). It either transmits conformational changes from CF(0) to CF(1) or is implicated in proton conduction. The polypeptide is ATP synthase subunit delta (Rhodopseudomonas palustris (strain BisB18)).